We begin with the raw amino-acid sequence, 20 residues long: Major extrapallial fluid protein (20 aa).

The disordered stretch occupies residues 1–20 (NPVDDHHDDHHDAPIVEHHD).

As to quaternary structure, homodimer. In terms of processing, glycosylated.

In terms of biological role, appears to be a building block of the soluble organic matrix of the shell. The protein binds calcium. In Mytilus edulis (Blue mussel), this protein is Major extrapallial fluid protein.